Here is a 333-residue protein sequence, read N- to C-terminus: GTPase Obg (333 aa).

The 158-residue stretch at 1 to 158 (MFIDSAKIYV…RNIDLELKLL (158 aa)) folds into the Obg domain. Positions 121 to 143 (HGGKGNQHFATPTNRAPRYSEPA) are disordered. The region spanning 159 to 323 (ADIGLVGFPN…LKDVLWRIIQ (165 aa)) is the OBG-type G domain. GTP-binding positions include 165–172 (GFPNAGKS), 190–194 (FTTLE), 212–215 (DIPG), 279–282 (SKMD), and 304–306 (SSV). The Mg(2+) site is built by Ser-172 and Thr-192.

This sequence belongs to the TRAFAC class OBG-HflX-like GTPase superfamily. OBG GTPase family. Monomer. It depends on Mg(2+) as a cofactor.

The protein localises to the cytoplasm. An essential GTPase which binds GTP, GDP and possibly (p)ppGpp with moderate affinity, with high nucleotide exchange rates and a fairly low GTP hydrolysis rate. Plays a role in control of the cell cycle, stress response, ribosome biogenesis and in those bacteria that undergo differentiation, in morphogenesis control. This is GTPase Obg from Chloroherpeton thalassium (strain ATCC 35110 / GB-78).